Here is a 341-residue protein sequence, read N- to C-terminus: HTH-type transcriptional repressor PurR (341 aa).

The region spanning 2–56 (ATIKDVAKRANVSTTTVSHVINKTRFVAEETRNAVWAAIKELHYSPSAVARSLKV) is the HTH lacI-type domain. The H-T-H motif DNA-binding region spans 4–23 (IKDVAKRANVSTTTVSHVIN). A DNA-binding region spans residues 48-56 (SAVARSLKV). Residues Y73, R190, T192, F221, and D275 each coordinate hypoxanthine.

Homodimer.

The protein operates within purine metabolism; purine nucleotide biosynthesis [regulation]. In terms of biological role, is the main repressor of the genes involved in the de novo synthesis of purine nucleotides, regulating purB, purC, purEK, purF, purHD, purL, purMN and guaBA expression. PurR is allosterically activated to bind its cognate DNA by binding the purine corepressors, hypoxanthine or guanine, thereby effecting transcription repression. The chain is HTH-type transcriptional repressor PurR from Salmonella typhimurium (strain LT2 / SGSC1412 / ATCC 700720).